The sequence spans 1577 residues: Dynamin-binding protein (1577 aa).

Met-1 carries the post-translational modification N-acetylmethionine. SH3 domains follow at residues 2-61, 66-126, 145-204, and 243-302; these read EAGS…IVTI, EGER…ELCL, YSMG…LLGP, and EPGT…LCPD. Disordered regions lie at residues 211 to 244 and 335 to 395; these read SVSS…EEEP and EEQR…WEMP. Acidic residues predominate over residues 230–244; the sequence is VGEEEIGPDEDEEEP. Over residues 335-344 the composition is skewed to basic and acidic residues; that stretch reads EEQRHETSDH. Phosphoserine is present on Ser-496. Disordered stretches follow at residues 591–624 and 639–659; these read GSSK…TSPH and VRPS…NAVS. Residues 639-649 are compositionally biased toward pro residues; sequence VRPSRPAPLPP. A Phosphoserine modification is found at Ser-684. Positions 693–757 form a coiled coil; it reads LVLVRIEEME…ELQQLREMTL (65 aa). The region spanning 784–967 is the DH domain; that stretch reads KRAKVIEELL…KEINVNINEY (184 aa). Residues 1008 to 1217 form the BAR domain; sequence LKHLTGFAPQ…LKVAGREGNL (210 aa). A coiled-coil region spans residues 1136-1173; it reads ERAEKLKDKKTLEELQSARNNYEALNAQLLDELPKFHQ. The SH3 5 domain maps to 1285–1348; that stretch reads PPEKLFQAER…YSSFLKPYNP (64 aa). Positions 1348–1487 are disordered; it reads PRRSHSDASV…SVPGRNGQSQ (140 aa). Over residues 1376–1405 the composition is skewed to polar residues; sequence RQNSGSTLTFNPSSMAVSFTSGSCQKQPQD. Residues 1419–1442 show a composition bias toward low complexity; it reads SASLNPSNSESSPSRCPSDPDSTS. An SH3 6 domain is found at 1513 to 1576; that stretch reads EGNQVYFAVY…PSNYIRKTEY (64 aa).

In terms of assembly, binds DNM1 via its N-terminal SH3 domains. The C-terminal SH3 domain binds a complex containing actin, tubulin, Hsp70 and actin-regulatory proteins, such as ENAH, EVL, WIRE, CR16, WAVE1 and NAP1L1. Interacts with FASLG. Interacts (via SH3 domain 6) with WASL. Interacts (via SH3 domain 6) interacts with ENAH. Interacts (via C-terminal domain) with TJP1; required for the apical cell-cell junction localization of DNMBP. As to quaternary structure, (Microbial infection) Interacts (via SH3 domain 6) with L.monocytogenes InlC. As to expression, detected in heart, brain, lung, liver, skeletal muscle, kidney and pancreas.

The protein localises to the cytoplasm. It is found in the golgi apparatus. It localises to the golgi stack. Its subcellular location is the cytoskeleton. The protein resides in the synapse. The protein localises to the cell junction. Its function is as follows. Plays a critical role as a guanine nucleotide exchange factor (GEF) for CDC42 in several intracellular processes associated with the actin and microtubule cytoskeleton. Regulates the structure of apical junctions through F-actin organization in epithelial cells. Participates in the normal lumenogenesis of epithelial cell cysts by regulating spindle orientation. Plays a role in ciliogenesis. May play a role in membrane trafficking between the cell surface and the Golgi. The protein is Dynamin-binding protein of Homo sapiens (Human).